Consider the following 322-residue polypeptide: D-alanine--D-alanine ligase (322 aa).

One can recognise an ATP-grasp domain in the interval 110–310 (KAVLAAAGIP…FDRLVFWIVE (201 aa)). 137–191 (MPPPYVVKPNAEGSSVGVSLVFEGANGPPRQLAAPDWAFGEQVMVEPYIPGLELA) contributes to the ATP binding site. Mg(2+) contacts are provided by Asp263, Glu277, and Asn279.

The protein belongs to the D-alanine--D-alanine ligase family. Mg(2+) serves as cofactor. Requires Mn(2+) as cofactor.

It is found in the cytoplasm. It carries out the reaction 2 D-alanine + ATP = D-alanyl-D-alanine + ADP + phosphate + H(+). It participates in cell wall biogenesis; peptidoglycan biosynthesis. Cell wall formation. The sequence is that of D-alanine--D-alanine ligase from Caulobacter sp. (strain K31).